Consider the following 92-residue polypeptide: Small ribosomal subunit protein bS18 (92 aa).

Residues 1–28 (MTQQGNSGERKPRGKGPKRPRKPKVDPF) form a disordered region. The span at 12 to 22 (PRGKGPKRPRK) shows a compositional bias: basic residues.

Belongs to the bacterial ribosomal protein bS18 family. In terms of assembly, part of the 30S ribosomal subunit. Forms a tight heterodimer with protein bS6.

Functionally, binds as a heterodimer with protein bS6 to the central domain of the 16S rRNA, where it helps stabilize the platform of the 30S subunit. The sequence is that of Small ribosomal subunit protein bS18 from Deinococcus radiodurans (strain ATCC 13939 / DSM 20539 / JCM 16871 / CCUG 27074 / LMG 4051 / NBRC 15346 / NCIMB 9279 / VKM B-1422 / R1).